Reading from the N-terminus, the 554-residue chain is Glucose-6-phosphate isomerase (554 aa).

Glu-359 serves as the catalytic Proton donor. Active-site residues include His-390 and Lys-518.

This sequence belongs to the GPI family.

Its subcellular location is the cytoplasm. It catalyses the reaction alpha-D-glucose 6-phosphate = beta-D-fructose 6-phosphate. It functions in the pathway carbohydrate biosynthesis; gluconeogenesis. Its pathway is carbohydrate degradation; glycolysis; D-glyceraldehyde 3-phosphate and glycerone phosphate from D-glucose: step 2/4. Its function is as follows. Catalyzes the reversible isomerization of glucose-6-phosphate to fructose-6-phosphate. This is Glucose-6-phosphate isomerase from Pseudomonas fluorescens (strain Pf0-1).